The chain runs to 143 residues: Small ribosomal subunit protein bS6 (143 aa).

The segment at Ser-100–Asn-143 is disordered. Composition is skewed to basic and acidic residues over residues Lys-104–Val-113 and Asp-122–Asn-143.

It belongs to the bacterial ribosomal protein bS6 family.

Functionally, binds together with bS18 to 16S ribosomal RNA. In Hamiltonella defensa subsp. Acyrthosiphon pisum (strain 5AT), this protein is Small ribosomal subunit protein bS6.